The chain runs to 1146 residues: Ankyrin repeat and fibronectin type-III domain-containing protein 1 (1146 aa).

ANK repeat units follow at residues 133-162 (QGNE…PEEL) and 170-199 (EGLT…RESP). The Fibronectin type-III domain maps to 270-366 (MPTNVCLMVT…TTTPACASPS (97 aa)). Residues 607–614 (GLYLGYLK) form a highly conserved peptide sequence region. Disordered stretches follow at residues 855–887 (NSTS…QPCS), 945–964 (VKTP…NPDH), and 1106–1146 (PWAS…SSML). The span at 1131–1146 (EGPTASPMSEILSSML) shows a compositional bias: polar residues.

Functionally, may play a role in neuronal function. This chain is Ankyrin repeat and fibronectin type-III domain-containing protein 1, found in Homo sapiens (Human).